Here is a 314-residue protein sequence, read N- to C-terminus: MLRIYAPASSANISVGFDTLGAAISPIDGSLLGDVVQIESISTGFELESAGYFVRKLPKEPQKNIVYQAYVLFSEQLKLRGANVKPLRLTLEKNMPIGSGLGSSACSIVAALVALNQFHNEPFSKMELLEMMGELEGRISGSIHYDNVAPCYLGGVQFMVQSLGNICQKLPFFDNWYWVLAYPGIEVSTAEARAILPKSYTRQNVIAHGRHLGGFVHACHTHQENLAAIMMKDVIAEPYRESLLPNFAEVKQATRDLGALATGISGSGPTIFSIAPDLQTAIKLSSYLESHYLQNNEGFVHVCKVDNEGTREIK.

Position 96–106 (96–106) interacts with ATP; it reads PIGSGLGSSAC.

It belongs to the GHMP kinase family. Homoserine kinase subfamily.

It localises to the cytoplasm. It carries out the reaction L-homoserine + ATP = O-phospho-L-homoserine + ADP + H(+). It functions in the pathway amino-acid biosynthesis; L-threonine biosynthesis; L-threonine from L-aspartate: step 4/5. Catalyzes the ATP-dependent phosphorylation of L-homoserine to L-homoserine phosphate. This chain is Homoserine kinase, found in Haemophilus influenzae (strain PittEE).